We begin with the raw amino-acid sequence, 85 residues long: Polcalcin Bet v 4 (85 aa).

EF-hand domains lie at 7–42 (QDKA…LGSI) and 42–77 (ITPD…NRGL). The Ca(2+) site is built by aspartate 20, asparagine 22, aspartate 24, lysine 26, glutamate 31, aspartate 55, aspartate 57, aspartate 59, and glutamate 66.

In terms of assembly, monomer.

The protein is Polcalcin Bet v 4 (BETV4) of Betula pendula (European white birch).